Reading from the N-terminus, the 182-residue chain is Lipid A acyltransferase PagP (182 aa).

An N-terminal signal peptide occupies residues 1 to 21 (MTQYFRALAFFLLLVPATAMA). Cysteine 22 carries N-palmitoyl cysteine lipidation. A lipid anchor (S-diacylglycerol cysteine) is attached at cysteine 22. Catalysis depends on residues histidine 55, aspartate 98, and serine 99.

Belongs to the lipid A palmitoyltransferase family. Homodimer.

It is found in the cell outer membrane. The enzyme catalyses a lipid A + a 1,2-diacyl-sn-glycero-3-phosphocholine = a hepta-acyl lipid A + a 2-acyl-sn-glycero-3-phosphocholine. It catalyses the reaction a lipid IVA + a 1,2-diacyl-sn-glycero-3-phosphocholine = a lipid IVB + a 2-acyl-sn-glycero-3-phosphocholine. It carries out the reaction a lipid IIA + a 1,2-diacyl-sn-glycero-3-phosphocholine = a lipid IIB + a 2-acyl-sn-glycero-3-phosphocholine. Functionally, transfers a fatty acid residue from the sn-1 position of a phospholipid to the N-linked hydroxyfatty acid chain on the proximal unit of lipid A or its precursors. Required for resistance to cationic antimicrobial peptides (CAMPs). Modifications of lipid A with an acyl chain to evade host immune defenses by resisting antibody-mediated complement lysis during respiratory infection. The sequence is that of Lipid A acyltransferase PagP from Bordetella bronchiseptica (strain ATCC BAA-588 / NCTC 13252 / RB50) (Alcaligenes bronchisepticus).